Reading from the N-terminus, the 172-residue chain is Translationally-controlled tumor protein (172 aa).

Positions 1–172 (MIIYRDLISH…FKDGLEMEKC (172 aa)) constitute a TCTP domain. Ser46 bears the Phosphoserine; by PLK1 mark. Residue Ser53 is modified to Phosphoserine. At Ser64 the chain carries Phosphoserine; by PLK1. The interval 70-172 (VDIVMNHHLQ…FKDGLEMEKC (103 aa)) is required for reduction of TSC22D1 protein stability.

Belongs to the TCTP family. In terms of assembly, homodimer. Interacts with STEAP3. Interacts with TSC22D1; interaction results in the destabilization of TSC22D1 protein.

It is found in the cytoplasm. In terms of biological role, involved in calcium binding and microtubule stabilization. Acts as a negative regulator of TSC22D1-mediated apoptosis, via interaction with and destabilization of TSC22D1 protein. The polypeptide is Translationally-controlled tumor protein (TPT1) (Oryctolagus cuniculus (Rabbit)).